A 269-amino-acid chain; its full sequence is tRNA pseudouridine synthase A (269 aa).

Asp-55 functions as the Nucleophile in the catalytic mechanism. Tyr-111 is a substrate binding site.

It belongs to the tRNA pseudouridine synthase TruA family.

It catalyses the reaction uridine(38/39/40) in tRNA = pseudouridine(38/39/40) in tRNA. In terms of biological role, formation of pseudouridine at positions 38, 39 and 40 in the anticodon stem and loop of transfer RNAs. This is tRNA pseudouridine synthase A from Methanosarcina mazei (strain ATCC BAA-159 / DSM 3647 / Goe1 / Go1 / JCM 11833 / OCM 88) (Methanosarcina frisia).